We begin with the raw amino-acid sequence, 230 residues long: Large ribosomal subunit protein uL1 (230 aa).

Belongs to the universal ribosomal protein uL1 family. In terms of assembly, part of the 50S ribosomal subunit.

Binds directly to 23S rRNA. The L1 stalk is quite mobile in the ribosome, and is involved in E site tRNA release. In terms of biological role, protein L1 is also a translational repressor protein, it controls the translation of the L11 operon by binding to its mRNA. The chain is Large ribosomal subunit protein uL1 from Chromohalobacter salexigens (strain ATCC BAA-138 / DSM 3043 / CIP 106854 / NCIMB 13768 / 1H11).